Reading from the N-terminus, the 359-residue chain is Type-1 angiotensin II receptor (359 aa).

Residues 1-25 (MVPNYSTEETVKRIHVDCPVSGRHS) are Extracellular-facing. Asn4 carries an N-linked (GlcNAc...) asparagine glycan. Asp17 is an angiotensin II binding site. Disulfide bonds link Cys18-Cys274 and Cys101-Cys180. The helical transmembrane segment at 26–55 (YIYIMVPTVYSIIFIIGIFGNSLVVIVIYC) threads the bilayer. The Cytoplasmic portion of the chain corresponds to 56 to 61 (YMKLKT). Residues 62–89 (VASIFLLNLALADLCFLITLPLWAAYTA) form a helical membrane-spanning segment. Residues 90 to 98 (MEYQWPFGN) are Extracellular-facing. A helical transmembrane segment spans residues 99-125 (CLCKLASAGISFNLYASVFLLTCLSID). The Cytoplasmic segment spans residues 126 to 141 (RYLAIVHPVKSRIRRT). A helical transmembrane segment spans residues 142-165 (MFVARVTCIVIWLLAGVASLPVII). Residues 166–190 (HRNIFFAENLNMTVCGFRYDNNNTT) are Extracellular-facing. Arg167 is a binding site for angiotensin II. Residue Asn176 is glycosylated (N-linked (GlcNAc...) asparagine). Positions 182 and 184 each coordinate angiotensin II. Residues Asn187 and Asn188 are each glycosylated (N-linked (GlcNAc...) asparagine). The helical transmembrane segment at 191-216 (LRVGLGLSKNLLGFLIPFLIILTSYT) threads the bilayer. Lys199 is an angiotensin II binding site. The Cytoplasmic portion of the chain corresponds to 217-239 (LIWKTLKKAYQIQRNKTRNDDIF). A helical transmembrane segment spans residues 240 to 268 (KMIVAIVFFFFFSWIPHQVFTFLDVLIQL). At 269 to 278 (HVITDCKITD) the chain is on the extracellular side. The chain crosses the membrane as a helical span at residues 279 to 304 (IVDTAMPFTICIAYFNNCLNPFFYVF). Over 305 to 359 (FGKNFKKYFLQLIKYIPPNVSTHPSLTTKMSSLSYRPPENIRLPTKKTAGSFDTE) the chain is Cytoplasmic.

Belongs to the G-protein coupled receptor 1 family. Post-translationally, C-terminal Ser or Thr residues may be phosphorylated. As to expression, adrenal medulla.

It localises to the cell membrane. Functionally, receptor for angiotensin II, a vasoconstricting peptide, which acts as a key regulator of blood pressure and sodium retention by the kidney. The activated receptor in turn couples to G-alpha proteins G(q) (GNAQ, GNA11, GNA14 or GNA15) and thus activates phospholipase C and increases the cytosolic Ca(2+) concentrations, which in turn triggers cellular responses such as stimulation of protein kinase C. This chain is Type-1 angiotensin II receptor (AGTR1), found in Meleagris gallopavo (Wild turkey).